Here is a 699-residue protein sequence, read N- to C-terminus: Elongation factor G 2 (699 aa).

The 283-residue stretch at 8–290 folds into the tr-type G domain; sequence ERYRNIGICA…AVIEYLPSPT (283 aa). GTP-binding positions include 17–24, 88–92, and 142–145; these read AHVDAGKT, DTPGH, and NKMD.

It belongs to the TRAFAC class translation factor GTPase superfamily. Classic translation factor GTPase family. EF-G/EF-2 subfamily.

The protein localises to the cytoplasm. Catalyzes the GTP-dependent ribosomal translocation step during translation elongation. During this step, the ribosome changes from the pre-translocational (PRE) to the post-translocational (POST) state as the newly formed A-site-bound peptidyl-tRNA and P-site-bound deacylated tRNA move to the P and E sites, respectively. Catalyzes the coordinated movement of the two tRNA molecules, the mRNA and conformational changes in the ribosome. The polypeptide is Elongation factor G 2 (Colwellia psychrerythraea (strain 34H / ATCC BAA-681) (Vibrio psychroerythus)).